The chain runs to 491 residues: MEKLWLNSMFSNGKLEHKYRLSRSMDSLGPIRYSSGSEDPVLNAMDNKVSSWNDSGSCNFSNVEHFLDIIDIWSFISDDTFLVRDSNGDSFSIYFDIENQIFEIDNDSTFINELESSFSSYLDSSSMNSGSKKSSRYYYRYMYDTQSSWNNHINSCIDSYLRYEISIDSYISGETHNYSDNYVYNFICNESISGNESRNSAIRTSVNGSDFNIRGRSNDLDINKKYRHLWVQCENCYGLNYKQFFRSRLNICEHCGYHLKMSSSERIELLIDPGTWDPLDENMVSTDPIEFHSEEEPYRDRIDSYQKKTGLTEAVQTGIGELNGIPIAIGVMDFQFMGGSMGSVVGEKITRLIEYATNKSLPVIIVCASGGARMQEGSLSLMQMAKISSALYNYQLNKKLFYVAILTSPTTGGVTASFGMLGDIIIAEPNAYIAFAGKRVIEQTLNKTVPDGSQAAEYLFQKGLFDLIVPRNLLKGVLGELFQLHGFFPLT.

One can recognise a CoA carboxyltransferase N-terminal domain in the interval 229-491 (LWVQCENCYG…FQLHGFFPLT (263 aa)). The Zn(2+) site is built by Cys-233, Cys-236, Cys-252, and Cys-255. The C4-type zinc finger occupies 233–255 (CENCYGLNYKQFFRSRLNICEHC).

It belongs to the AccD/PCCB family. As to quaternary structure, acetyl-CoA carboxylase is a heterohexamer composed of biotin carboxyl carrier protein, biotin carboxylase and 2 subunits each of ACCase subunit alpha and ACCase plastid-coded subunit beta (accD). It depends on Zn(2+) as a cofactor.

Its subcellular location is the plastid. It is found in the chloroplast stroma. The enzyme catalyses N(6)-carboxybiotinyl-L-lysyl-[protein] + acetyl-CoA = N(6)-biotinyl-L-lysyl-[protein] + malonyl-CoA. The protein operates within lipid metabolism; malonyl-CoA biosynthesis; malonyl-CoA from acetyl-CoA: step 1/1. Component of the acetyl coenzyme A carboxylase (ACC) complex. Biotin carboxylase (BC) catalyzes the carboxylation of biotin on its carrier protein (BCCP) and then the CO(2) group is transferred by the transcarboxylase to acetyl-CoA to form malonyl-CoA. This Lemna minor (Common duckweed) protein is Acetyl-coenzyme A carboxylase carboxyl transferase subunit beta, chloroplastic.